The chain runs to 291 residues: Phytanoyl-CoA dioxygenase domain-containing protein 1 (291 aa).

Threonine 55 is subject to Phosphothreonine. 2-oxoglutarate is bound by residues lysine 102, methionine 141, 156–158, and tryptophan 174; that span reads HQD. Fe cation contacts are provided by histidine 156 and aspartate 158. Residue histidine 246 participates in Fe cation binding. Positions 248 and 257 each coordinate 2-oxoglutarate.

This sequence belongs to the PhyH family. PHYHD1 subfamily. The cofactor is Fe cation.

Its function is as follows. 2-oxoglutarate(2OG)-dependent dioxygenase that catalyzes the conversion of 2-oxoglutarate to succinate and CO(2) in an iron-dependent manner. However, does not couple 2OG turnover to the hydroxylation of acyl-coenzyme A derivatives, implying that it is not directly involved in phytanoyl coenzyme-A metabolism. Does not show detectable activity towards fatty acid CoA thioesters. The polypeptide is Phytanoyl-CoA dioxygenase domain-containing protein 1 (Mus musculus (Mouse)).